A 2785-amino-acid chain; its full sequence is Testis-expressed protein 15 (2785 aa).

Over residues serine 262–serine 274 the composition is skewed to low complexity. 8 disordered regions span residues serine 262–aspartate 331, glutamate 596–glutamine 620, asparagine 661–aspartate 683, threonine 904–serine 924, valine 943–isoleucine 1064, asparagine 2276–lysine 2458, aspartate 2470–aspartate 2511, and threonine 2571–alanine 2601. The span at aspartate 275–valine 286 shows a compositional bias: basic and acidic residues. Polar residues predominate over residues threonine 314–aspartate 331. Basic and acidic residues predominate over residues glutamate 596–threonine 611. Polar residues-rich tracts occupy residues histidine 962–asparagine 989 and histidine 1021–alanine 1031. Basic and acidic residues predominate over residues lysine 1033–glutamate 1042. Composition is skewed to polar residues over residues serine 1049 to isoleucine 1064, aspartate 2291 to aspartate 2314, glutamate 2327 to valine 2338, asparagine 2353 to alanine 2387, arginine 2394 to lysine 2415, alanine 2431 to glutamate 2454, aspartate 2491 to alanine 2502, and aspartate 2585 to alanine 2601.

Belongs to the TEX15 family. Interacts with PIWIL4. Interacts with PIWIL2. As to expression, detected in testis and ovary, and at lower levels in lung and brain.

Its subcellular location is the cytoplasm. The protein localises to the nucleus. Its function is as follows. Required during spermatogenesis for normal chromosome synapsis and meiotic recombination in germ cells. Necessary for formation of DMC1 and RAD51 foci on meiotic chromosomes, suggesting a specific role in DNA double-stranded break repair. Essential executor of PIWIL4-piRNA pathway directed transposon DNA methylation and silencing in the male embryonic germ cells. PIWIL4-piRNA binds to nascent transposon transcripts and interacts with TEX15, which may in turn recruit the epigenetic silencing machinery to the transposon loci. Not required for piRNA biosynthesis. In Mus musculus (Mouse), this protein is Testis-expressed protein 15.